We begin with the raw amino-acid sequence, 220 residues long: Metalloproteinase inhibitor 2 (220 aa).

The signal sequence occupies residues M1–A26. Position 27 (C27) interacts with Zn(2+). 2 involved in metalloproteinase-binding regions span residues C27–S30 and S95–A96. 6 disulfides stabilise this stretch: C27–C98, C29–C127, C39–C152, C154–C201, C159–C164, and C172–C193. Residues C27 to C152 enclose the NTR domain.

It belongs to the protease inhibitor I35 (TIMP) family. As to quaternary structure, interacts (via the C-terminal) with MMP2 (via the C-terminal PEX domain); the interaction inhibits the MMP2 activity. Post-translationally, the activity of TIMP2 is dependent on the presence of disulfide bonds.

The protein resides in the secreted. Its function is as follows. Complexes with metalloproteinases (such as collagenases) and irreversibly inactivates them by binding to their catalytic zinc cofactor. This is Metalloproteinase inhibitor 2 (TIMP2) from Canis lupus familiaris (Dog).